A 226-amino-acid chain; its full sequence is ATP synthase subunit a (226 aa).

6 helical membrane-spanning segments follow: residues 18–38 (FITGFFVVLTAVLMFLISLGA), 79–99 (LAGTIALYVFFSNMIGIIPGF), 105–125 (SWSFTLVLALIVFFYYHFEGI), 134–154 (FAHFAGPVKWLAPFMFPIEII), 179–199 (LIMLLLVPWAVPVAPFMVLFF), and 201–221 (GILQAFVFMILTYVYLAGAVL).

It belongs to the ATPase A chain family. In terms of assembly, F-type ATPases have 2 components, CF(1) - the catalytic core - and CF(0) - the membrane proton channel. CF(1) has five subunits: alpha(3), beta(3), gamma(1), delta(1), epsilon(1). CF(0) has three main subunits: a(1), b(2) and c(9-12). The alpha and beta chains form an alternating ring which encloses part of the gamma chain. CF(1) is attached to CF(0) by a central stalk formed by the gamma and epsilon chains, while a peripheral stalk is formed by the delta and b chains.

It localises to the cell inner membrane. In terms of biological role, key component of the proton channel; it plays a direct role in the translocation of protons across the membrane. In Helicobacter pylori (strain HPAG1), this protein is ATP synthase subunit a.